We begin with the raw amino-acid sequence, 245 residues long: tRNA pseudouridine synthase A (245 aa).

Residue aspartate 52 is the Nucleophile of the active site. Tyrosine 111 serves as a coordination point for substrate.

It belongs to the tRNA pseudouridine synthase TruA family. In terms of assembly, homodimer.

The enzyme catalyses uridine(38/39/40) in tRNA = pseudouridine(38/39/40) in tRNA. Formation of pseudouridine at positions 38, 39 and 40 in the anticodon stem and loop of transfer RNAs. The protein is tRNA pseudouridine synthase A of Ehrlichia chaffeensis (strain ATCC CRL-10679 / Arkansas).